Here is a 467-residue protein sequence, read N- to C-terminus: Methylenetetrahydrofolate--tRNA-(uracil-5-)-methyltransferase TrmFO (467 aa).

10 to 15 (GGGMAG) contacts FAD.

The protein belongs to the MnmG family. TrmFO subfamily. Requires FAD as cofactor.

It is found in the cytoplasm. The catalysed reaction is uridine(54) in tRNA + (6R)-5,10-methylene-5,6,7,8-tetrahydrofolate + NADH + H(+) = 5-methyluridine(54) in tRNA + (6S)-5,6,7,8-tetrahydrofolate + NAD(+). It catalyses the reaction uridine(54) in tRNA + (6R)-5,10-methylene-5,6,7,8-tetrahydrofolate + NADPH + H(+) = 5-methyluridine(54) in tRNA + (6S)-5,6,7,8-tetrahydrofolate + NADP(+). Functionally, catalyzes the folate-dependent formation of 5-methyl-uridine at position 54 (M-5-U54) in all tRNAs. The protein is Methylenetetrahydrofolate--tRNA-(uracil-5-)-methyltransferase TrmFO of Hyphomonas neptunium (strain ATCC 15444).